A 107-amino-acid polypeptide reads, in one-letter code: Quaternary ammonium compound-resistance protein QacC (107 aa).

Topologically, residues 1–2 (MP) are cytoplasmic. A helical transmembrane segment spans residues 3-20 (YIYLIIAISTEVIGSAFL). Topologically, residues 21–29 (KSSEGFSKF) are extracellular. A helical membrane pass occupies residues 30-47 (IPSLGTIISFGICFYFLS). Over 48-56 (KTMQHLPLN) the chain is Cytoplasmic. The helical transmembrane segment at 57–75 (ITYATWAGLGLVLTTVVSI) threads the bilayer. The Extracellular segment spans residues 76–85 (IIFKEQINLI). A helical membrane pass occupies residues 86-103 (TIVSIVLIIVGVVSLNIF). At 104 to 107 (GTSH) the chain is on the cytoplasmic side.

This sequence belongs to the drug/metabolite transporter (DMT) superfamily. Small multidrug resistance (SMR) (TC 2.A.7.1) family.

It localises to the cell membrane. Ethidium export is inhibited by N-ethylmaleimide (NEM). Its function is as follows. Multidrug exporter. Is implicated for the resistance to bacteriocidal quaternary ammonium compounds and ethidium bromide. This Staphylococcus aureus protein is Quaternary ammonium compound-resistance protein QacC.